Consider the following 510-residue polypeptide: Glycogen synthase (510 aa).

K18 contacts ADP-alpha-D-glucose.

Belongs to the glycosyltransferase 1 family. Bacterial/plant glycogen synthase subfamily.

The enzyme catalyses [(1-&gt;4)-alpha-D-glucosyl](n) + ADP-alpha-D-glucose = [(1-&gt;4)-alpha-D-glucosyl](n+1) + ADP + H(+). It participates in glycan biosynthesis; glycogen biosynthesis. Functionally, synthesizes alpha-1,4-glucan chains using ADP-glucose. The chain is Glycogen synthase from Bordetella bronchiseptica (strain ATCC BAA-588 / NCTC 13252 / RB50) (Alcaligenes bronchisepticus).